Here is a 75-residue protein sequence, read N- to C-terminus: Bacteriocin lactococcin-A (75 aa).

The propeptide occupies 1-21 (MKNQLNFNIVSDEELSEANGG). The chain crosses the membrane as a helical span at residues 30–52 (AAGDLYYNTNTHKYVYQQTQNAF).

The protein localises to the secreted. It localises to the host cell membrane. In terms of biological role, kills Lactococci. The protein is Bacteriocin lactococcin-A (lcnA) of Lactococcus lactis subsp. cremoris (Streptococcus cremoris).